Consider the following 411-residue polypeptide: MLTNLRLVTLSSETSADNNGYQIIEDGMVGITNGKIMFVGSVSDSPLACHNDLHGHPDVIDCGNALVTPGLIDCHTHLVFAGNRANEFEQRLNGMPYEEMAKRGGGIISTVQATREATEDELYQLAIKRLNGLKRDGVTTIEIKSGYGLTLDDELKMLRVARRIGDMPDIKVSTTLLAAHAVPPEYKNRADDYIEYVCQHIIPAAVEQGLADYVDVFCEGIGFSTQQCQRVFETAKHYGLGIKGHTEQLSNLGGSALAARMGATSVDHIEHLDHDGVAALAANNTVATLLPGAYYFLRETQRPPIEHLRKLQVPMAISTDFNPGTSPIASLRTMMNMACTFFRLTPEECLRGVTCNAAQALGLEASRGKISVGMEADLALWDIDTPAELSYRLGVPDLVARIVDGELFYAK.

Histidine 75 and histidine 77 together coordinate Fe(3+). Residues histidine 75 and histidine 77 each contribute to the Zn(2+) site. Positions 84, 147, and 180 each coordinate 4-imidazolone-5-propanoate. Tyrosine 147 serves as a coordination point for N-formimidoyl-L-glutamate. Histidine 245 lines the Fe(3+) pocket. Position 245 (histidine 245) interacts with Zn(2+). Glutamine 248 is a 4-imidazolone-5-propanoate binding site. Position 320 (aspartate 320) interacts with Fe(3+). Residue aspartate 320 participates in Zn(2+) binding. N-formimidoyl-L-glutamate-binding residues include asparagine 322 and glycine 324. A 4-imidazolone-5-propanoate-binding site is contributed by threonine 325.

It belongs to the metallo-dependent hydrolases superfamily. HutI family. Zn(2+) serves as cofactor. Requires Fe(3+) as cofactor.

It localises to the cytoplasm. It catalyses the reaction 4-imidazolone-5-propanoate + H2O = N-formimidoyl-L-glutamate. It participates in amino-acid degradation; L-histidine degradation into L-glutamate; N-formimidoyl-L-glutamate from L-histidine: step 3/3. Its function is as follows. Catalyzes the hydrolytic cleavage of the carbon-nitrogen bond in imidazolone-5-propanoate to yield N-formimidoyl-L-glutamate. It is the third step in the universal histidine degradation pathway. This is Imidazolonepropionase from Photobacterium profundum (strain SS9).